Here is a 616-residue protein sequence, read N- to C-terminus: Dihydroxy-acid dehydratase (616 aa).

A Mg(2+)-binding site is contributed by Asp-81. A [2Fe-2S] cluster-binding site is contributed by Cys-122. 2 residues coordinate Mg(2+): Asp-123 and Lys-124. N6-carboxylysine is present on Lys-124. Residue Cys-195 coordinates [2Fe-2S] cluster. Mg(2+) is bound at residue Glu-491. Catalysis depends on Ser-517, which acts as the Proton acceptor.

It belongs to the IlvD/Edd family. As to quaternary structure, homodimer. It depends on [2Fe-2S] cluster as a cofactor. Requires Mg(2+) as cofactor.

It carries out the reaction (2R)-2,3-dihydroxy-3-methylbutanoate = 3-methyl-2-oxobutanoate + H2O. It catalyses the reaction (2R,3R)-2,3-dihydroxy-3-methylpentanoate = (S)-3-methyl-2-oxopentanoate + H2O. Its pathway is amino-acid biosynthesis; L-isoleucine biosynthesis; L-isoleucine from 2-oxobutanoate: step 3/4. It participates in amino-acid biosynthesis; L-valine biosynthesis; L-valine from pyruvate: step 3/4. Its function is as follows. Functions in the biosynthesis of branched-chain amino acids. Catalyzes the dehydration of (2R,3R)-2,3-dihydroxy-3-methylpentanoate (2,3-dihydroxy-3-methylvalerate) into 2-oxo-3-methylpentanoate (2-oxo-3-methylvalerate) and of (2R)-2,3-dihydroxy-3-methylbutanoate (2,3-dihydroxyisovalerate) into 2-oxo-3-methylbutanoate (2-oxoisovalerate), the penultimate precursor to L-isoleucine and L-valine, respectively. The sequence is that of Dihydroxy-acid dehydratase from Yersinia pseudotuberculosis serotype O:1b (strain IP 31758).